We begin with the raw amino-acid sequence, 776 residues long: Meiotic expression up-regulated protein 1/2 (776 aa).

5 coiled-coil regions span residues 87-122 (YVLKVAEEKIEKLLKENGTLKNEEKCLRMQIVAQEE), 173-227 (FSEL…DLKE), 265-307 (YKVE…NDEE), 362-430 (KMSQ…RNNS), and 496-595 (INNQ…NTEL).

The chain is Meiotic expression up-regulated protein 1/2 (meu1) from Schizosaccharomyces pombe (strain 972 / ATCC 24843) (Fission yeast).